We begin with the raw amino-acid sequence, 403 residues long: Aromatic-L-amino-acid decarboxylase (403 aa).

Thr8 is a substrate binding site. 2 residues coordinate pyridoxal 5'-phosphate: Ala74 and Ser75. Residue His118 participates in substrate binding. The active site involves His118. Asp197 and Asn226 together coordinate pyridoxal 5'-phosphate. Lys229 is subject to N6-(pyridoxal phosphate)lysine. Residues Asn250 to Pro276 form a disordered region.

The protein belongs to the group II decarboxylase family. As to quaternary structure, homodimer. Pyridoxal 5'-phosphate serves as cofactor.

The enzyme catalyses L-dopa + H(+) = dopamine + CO2. It carries out the reaction 5-hydroxy-L-tryptophan + H(+) = serotonin + CO2. Catalyzes the decarboxylation of L-3,4-dihydroxyphenylalanine (L-DOPA) to dopamine and L-5-hydroxytryptophan (5-HTP) to serotonin. Catalyzes the formation of serotonin more efficiently than dopamine. Displays no activity to tyrosine. Variation in the synthesis of bioamines may be a factor contributing to natural variation in life span. The sequence is that of Aromatic-L-amino-acid decarboxylase (Ddc) from Drosophila lebanonensis (Fruit fly).